Reading from the N-terminus, the 558-residue chain is Polysialic acid transport protein KpsD (558 aa).

Residues 1 to 20 (MKLFKSILLIAACHAAQASA) form the signal peptide.

To E.coli K1 KpsD.

It is found in the periplasm. Its function is as follows. Involved in the translocation of the polysialic acid capsule across the outer membrane to the cell surface. May function as the periplasmic binding element of the PSA transport system, in which it transiently interacts with the membrane component of the transporter, binds polysaccharide and transports the polymer to a component in the outer membrane. This Escherichia coli protein is Polysialic acid transport protein KpsD (kpsD).